Consider the following 142-residue polypeptide: Regulatory protein RecX (142 aa).

It belongs to the RecX family.

It is found in the cytoplasm. Its function is as follows. Modulates RecA activity. The protein is Regulatory protein RecX of Thermus thermophilus (strain ATCC BAA-163 / DSM 7039 / HB27).